A 268-amino-acid polypeptide reads, in one-letter code: 3-methyl-2-oxobutanoate hydroxymethyltransferase (268 aa).

Mg(2+)-binding residues include Asp-46 and Asp-85. Residues 46–47 (DS), Asp-85, and Lys-114 each bind 3-methyl-2-oxobutanoate. Glu-116 provides a ligand contact to Mg(2+). The active-site Proton acceptor is Glu-183.

Belongs to the PanB family. In terms of assembly, homodecamer; pentamer of dimers. Requires Mg(2+) as cofactor.

The protein localises to the cytoplasm. The catalysed reaction is 3-methyl-2-oxobutanoate + (6R)-5,10-methylene-5,6,7,8-tetrahydrofolate + H2O = 2-dehydropantoate + (6S)-5,6,7,8-tetrahydrofolate. Its pathway is cofactor biosynthesis; coenzyme A biosynthesis. Its function is as follows. Catalyzes the reversible reaction in which hydroxymethyl group from 5,10-methylenetetrahydrofolate is transferred onto alpha-ketoisovalerate to form ketopantoate. This chain is 3-methyl-2-oxobutanoate hydroxymethyltransferase, found in Sulfolobus acidocaldarius (strain ATCC 33909 / DSM 639 / JCM 8929 / NBRC 15157 / NCIMB 11770).